We begin with the raw amino-acid sequence, 142 residues long: MAAMTVQLDMVSAESNIFSGRVAQLQVSGTEGELGIMPGHAALLTSIKPGMARIVKQDGSEEVFYLSGGILEVQPSSISVLADVVLRAEEIDEQAAVEAKRRAEAHMANAGADFNYAAAAIELAQAIAQLRVVETIKKNISR.

The protein belongs to the ATPase epsilon chain family. As to quaternary structure, F-type ATPases have 2 components, CF(1) - the catalytic core - and CF(0) - the membrane proton channel. CF(1) has five subunits: alpha(3), beta(3), gamma(1), delta(1), epsilon(1). CF(0) has three main subunits: a, b and c.

It localises to the cell inner membrane. Functionally, produces ATP from ADP in the presence of a proton gradient across the membrane. This Shewanella halifaxensis (strain HAW-EB4) protein is ATP synthase epsilon chain.